A 620-amino-acid polypeptide reads, in one-letter code: Transcription factor GTE11 (620 aa).

Residues 1–35 (MTVRNGGFPGDYNRNSFDSPGGCDDSPNASKDDET) form a disordered region. In terms of domain architecture, Bromo spans 124–230 (TSTMLRMKQC…KFFEVRWKTI (107 aa)). Positions 270–351 (NSLLEPAKRV…EFLRENQKKD (82 aa)) constitute an NET domain. Position 417 is a phosphoserine (Ser417). The tract at residues 445–620 (EKRYRAALLK…GNEVEEGEID (176 aa)) is transcription activation domain. Positions 470 to 544 (NQNEKRDPET…MEKSVEINEN (75 aa)) form a coiled coil. Disordered regions lie at residues 491-511 (KKKE…ARRK) and 597-620 (EDED…GEID).

In terms of assembly, interacts with BT1, BT2 and BT4.

The protein resides in the nucleus. In Arabidopsis thaliana (Mouse-ear cress), this protein is Transcription factor GTE11 (GTE11).